The sequence spans 280 residues: Lacto-N-neotetraose biosynthesis glycosyltransferase LgtE (280 aa).

It belongs to the glycosyltransferase 25 family.

It participates in glycan metabolism; lacto-N-neotetraose biosynthesis. Its pathway is bacterial outer membrane biogenesis; lipooligosaccharide biosynthesis. Adds the first galactose to the lacto-N-tetraose chain in lipooligosaccharide (LOS). The protein is Lacto-N-neotetraose biosynthesis glycosyltransferase LgtE (lgtE) of Neisseria meningitidis serogroup B (strain ATCC BAA-335 / MC58).